A 255-amino-acid chain; its full sequence is MKNSKVIKLQDRVPKLKNQKKRNKPPVNHRLILYISILFLLVLFLIYFRSPLSNIKKISVFGNHYMTDEQVMEKSGITYKTSYFRVTARQAEENLKKQIEIKSVDVKKRFPNKIDIHIEEYVTIGYINKNGKLQPLLENGKTLDILPSGKLPVAAPIFEPFKEEKMKELISELEKLTPTILRSISEIRYTPTTSNESHLTLYMNEGYEVSTTIQDFAKRMEAYPLILKQIEPGRKALIDLEVATYFKYLDDEKKK.

The Cytoplasmic segment spans residues 1-30 (MKNSKVIKLQDRVPKLKNQKKRNKPPVNHR). A helical transmembrane segment spans residues 31–51 (LILYISILFLLVLFLIYFRSP). The Extracellular portion of the chain corresponds to 52–255 (LSNIKKISVF…FKYLDDEKKK (204 aa)). Positions 53–121 (SNIKKISVFG…NKIDIHIEEY (69 aa)) constitute a POTRA domain.

The protein belongs to the FtsQ/DivIB family. DivIB subfamily.

The protein resides in the cell membrane. Cell division protein that may be involved in stabilizing or promoting the assembly of the division complex. The protein is Cell division protein DivIB of Bacillus cytotoxicus (strain DSM 22905 / CIP 110041 / 391-98 / NVH 391-98).